Reading from the N-terminus, the 482-residue chain is tRNA modification GTPase MnmE (482 aa).

(6S)-5-formyl-5,6,7,8-tetrahydrofolate is bound by residues arginine 25, glutamate 82, and lysine 135. The 174-residue stretch at 231–404 (GIKVVIAGQP…LRRVLLDIAG (174 aa)) folds into the TrmE-type G domain. Asparagine 241 provides a ligand contact to K(+). Residues 241–246 (NAGKSS), 260–266 (TPIAGTT), 285–288 (DTAG), and 385–387 (SAR) each bind GTP. A Mg(2+)-binding site is contributed by serine 245. K(+) is bound by residues threonine 260, isoleucine 262, and threonine 265. Threonine 266 provides a ligand contact to Mg(2+). Lysine 482 lines the (6S)-5-formyl-5,6,7,8-tetrahydrofolate pocket.

The protein belongs to the TRAFAC class TrmE-Era-EngA-EngB-Septin-like GTPase superfamily. TrmE GTPase family. Homodimer. Heterotetramer of two MnmE and two MnmG subunits. It depends on K(+) as a cofactor.

It localises to the cytoplasm. Exhibits a very high intrinsic GTPase hydrolysis rate. Involved in the addition of a carboxymethylaminomethyl (cmnm) group at the wobble position (U34) of certain tRNAs, forming tRNA-cmnm(5)s(2)U34. The chain is tRNA modification GTPase MnmE from Paracidovorax citrulli (strain AAC00-1) (Acidovorax citrulli).